Here is a 185-residue protein sequence, read N- to C-terminus: Peptidyl-tRNA hydrolase (185 aa).

Tyr-14 lines the tRNA pocket. His-19 serves as the catalytic Proton acceptor. The tRNA site is built by Tyr-64, Asn-66, and Asn-112.

It belongs to the PTH family. As to quaternary structure, monomer.

It localises to the cytoplasm. It carries out the reaction an N-acyl-L-alpha-aminoacyl-tRNA + H2O = an N-acyl-L-amino acid + a tRNA + H(+). Its function is as follows. Hydrolyzes ribosome-free peptidyl-tRNAs (with 1 or more amino acids incorporated), which drop off the ribosome during protein synthesis, or as a result of ribosome stalling. Functionally, catalyzes the release of premature peptidyl moieties from peptidyl-tRNA molecules trapped in stalled 50S ribosomal subunits, and thus maintains levels of free tRNAs and 50S ribosomes. The chain is Peptidyl-tRNA hydrolase from Lactiplantibacillus plantarum (strain ATCC BAA-793 / NCIMB 8826 / WCFS1) (Lactobacillus plantarum).